Here is a 411-residue protein sequence, read N- to C-terminus: Aspartokinase (411 aa).

Residue 7–10 (KFGG) coordinates ATP. 25–30 (RVIEEK) lines the substrate pocket. S41 lines the ATP pocket. Substrate is bound by residues 47–49 (TDE), E74, 125–126 (LN), 150–153 (RGGS), and S153. Residues 173 to 174 (TD) and 179 to 184 (FTTDPR) contribute to the ATP site. ACT domains lie at 264–338 (VTVF…SETG) and 344–411 (IVGS…KSER). Residues 289–291 (NVD), Q295, 355–356 (VA), 369–370 (QV), and 376–377 (SE) contribute to the substrate site.

This sequence belongs to the aspartokinase family. Tetramer consisting of 2 isoforms Alpha (catalytic and regulation) and of a homodimer of 2 isoforms Beta (regulation).

It carries out the reaction L-aspartate + ATP = 4-phospho-L-aspartate + ADP. It functions in the pathway amino-acid biosynthesis; L-lysine biosynthesis via DAP pathway; (S)-tetrahydrodipicolinate from L-aspartate: step 1/4. Its pathway is amino-acid biosynthesis; L-methionine biosynthesis via de novo pathway; L-homoserine from L-aspartate: step 1/3. The protein operates within amino-acid biosynthesis; L-threonine biosynthesis; L-threonine from L-aspartate: step 1/5. With respect to regulation, lysine-sensitive. In terms of biological role, catalyzes the phosphorylation of the beta-carboxyl group of aspartic acid with ATP to yield 4-phospho-L-aspartate, which is involved in the branched biosynthetic pathway leading to the biosynthesis of amino acids threonine, isoleucine and methionine. This chain is Aspartokinase (lysC), found in Bacillus sp. (strain MGA3).